The sequence spans 473 residues: ATP synthase subunit beta, chloroplastic (473 aa).

172-179 (GGAGVGKT) serves as a coordination point for ATP.

It belongs to the ATPase alpha/beta chains family. F-type ATPases have 2 components, CF(1) - the catalytic core - and CF(0) - the membrane proton channel. CF(1) has five subunits: alpha(3), beta(3), gamma(1), delta(1), epsilon(1). CF(0) has four main subunits: a(1), b(1), b'(1) and c(9-12).

The protein resides in the plastid. Its subcellular location is the chloroplast thylakoid membrane. It catalyses the reaction ATP + H2O + 4 H(+)(in) = ADP + phosphate + 5 H(+)(out). Produces ATP from ADP in the presence of a proton gradient across the membrane. The catalytic sites are hosted primarily by the beta subunits. This chain is ATP synthase subunit beta, chloroplastic, found in Pteridium esculentum (Bracken fern).